Reading from the N-terminus, the 101-residue chain is Small ribosomal subunit protein uS14A (101 aa).

The interval 32–71 is disordered; sequence RRPGTPEPERNRAVEELRRQPRDASATRVRNRDSVDGRPR. Basic and acidic residues-rich tracts occupy residues 38-53 and 61-70; these read EPERNRAVEELRRQPR and RNRDSVDGRP.

This sequence belongs to the universal ribosomal protein uS14 family. In terms of assembly, part of the 30S ribosomal subunit. Contacts proteins S3 and S10.

Binds 16S rRNA, required for the assembly of 30S particles and may also be responsible for determining the conformation of the 16S rRNA at the A site. The chain is Small ribosomal subunit protein uS14A from Streptomyces griseus subsp. griseus (strain JCM 4626 / CBS 651.72 / NBRC 13350 / KCC S-0626 / ISP 5235).